We begin with the raw amino-acid sequence, 249 residues long: Flavin-dependent thymidylate synthase (249 aa).

One can recognise a ThyX domain in the interval 8-225; sequence VKVKLLEYTP…PNLFKYSGPS (218 aa). FAD is bound by residues serine 62, 86–88, and glutamine 94; that span reads RHR. DUMP is bound by residues 83 to 86, 94 to 98, and arginine 164; these read QLVR and QQSQR. Positions 86–96 match the ThyX motif motif; the sequence is RHRIASYSQQS. Residues 180–182 and asparagine 186 each bind FAD; that span reads NAR. Residue arginine 191 coordinates dUMP. The active-site Involved in ionization of N3 of dUMP, leading to its activation is the arginine 191.

Belongs to the thymidylate synthase ThyX family. In terms of assembly, homotetramer. Requires FAD as cofactor.

It carries out the reaction dUMP + (6R)-5,10-methylene-5,6,7,8-tetrahydrofolate + NADPH + H(+) = dTMP + (6S)-5,6,7,8-tetrahydrofolate + NADP(+). Its pathway is pyrimidine metabolism; dTTP biosynthesis. Its function is as follows. Catalyzes the reductive methylation of 2'-deoxyuridine-5'-monophosphate (dUMP) to 2'-deoxythymidine-5'-monophosphate (dTMP) while utilizing 5,10-methylenetetrahydrofolate (mTHF) as the methyl donor, and NADPH and FADH(2) as the reductant. The protein is Flavin-dependent thymidylate synthase of Clostridium tetani (strain Massachusetts / E88).